A 689-amino-acid polypeptide reads, in one-letter code: MTQHTFLVEIGTEELPPKALRALAEAFAIHISGELDAANVRHGEVSWFAAPRRLAVKVAALGGAQADSDVEKRGPAIAQVFDADGNPTKAAEGWARGCGITVSQAERLATDKGEWLVYRARVKGQPVQELLCAVVSRALGKLPIPKMMRWGDNETQFIRPVHTVTLLLDDGVIAGNVLGIDADRIVRGHRFMGEREISLEHADQYPQVLLDRGRVMADYLQRKETIRRDAEEAAKRLGGVADLSESLLEEVTSLVEWPVVLTARFEEKFLAVPAEALVYTMKGDQKYFPVYDAAGNLLPHFIFVANIESKDPQQIIAGNEKVVRPRLADAEFFFNTDHKQRLEDRLPRLDTVLFQKQLGTLRDKSDRIEALSAWIAGRIGADVPQAARAGLLSKCDLMTNMVFEFTDTQGVMGMHYARHDGEPEAVALAQKEQYQPRFAGDALPTTLVSCAVAIADKMDTLAGIFGIGQHPKGDKDPFALRRATLGVLRIIVEKQLPLDLQTLTEEAVRLYGEKLTNDAVVNDVIDFMLGRFRAWYQEQGHSVDTIQAVLARRPTRPADFDARVRAVSYFRTLEEAASLAAANKRVSNILAKSDDPVYKDLQASVLKDPSEITLATHLVVLREKLQPLFEAGRYQDALVELAALREPVDAFFDSVMVMADDPQVRINRLTLLAQLRKLFLQVADISLLQ.

The protein belongs to the class-II aminoacyl-tRNA synthetase family. In terms of assembly, tetramer of two alpha and two beta subunits.

The protein resides in the cytoplasm. It catalyses the reaction tRNA(Gly) + glycine + ATP = glycyl-tRNA(Gly) + AMP + diphosphate. This Sodalis glossinidius (strain morsitans) protein is Glycine--tRNA ligase beta subunit.